Consider the following 325-residue polypeptide: Histone deacetylase 8 (325 aa).

The interval 1 to 272 (MSRVVKPKVA…WTYLTALIVG (272 aa)) is histone deacetylase. D49 provides a ligand contact to substrate. Residue H91 is the Proton acceptor of the active site. G99 is a binding site for substrate. A divalent metal cation contacts are provided by D126, H128, and D215. Y254 lines the substrate pocket.

It belongs to the histone deacetylase family. HD type 1 subfamily. A divalent metal cation serves as cofactor.

It is found in the nucleus. The protein resides in the chromosome. The protein localises to the cytoplasm. It carries out the reaction N(6)-acetyl-L-lysyl-[histone] + H2O = L-lysyl-[histone] + acetate. The enzyme catalyses N(6)-acetyl-L-lysyl-[protein] + H2O = L-lysyl-[protein] + acetate. It catalyses the reaction N(6)-(2E)-butenoyl-L-lysyl-[protein] + H2O = (2E)-2-butenoate + L-lysyl-[protein]. Its activity is regulated as follows. Its activity is inhibited by trichostatin A (TSA) and butyrate, 2 well known histone deacetylase inhibitors. Histone deacetylase that catalyzes the deacetylation of lysine residues on the N-terminal part of the core histones (H2A, H2B, H3 and H4). Histone deacetylation gives a tag for epigenetic repression and plays an important role in transcriptional regulation, cell cycle progression and developmental events. Histone deacetylases act via the formation of large multiprotein complexes. Also involved in the deacetylation of non-histone proteins. In addition to protein deacetylase activity, also has protein-lysine deacylase activity: acts as a protein decrotonylase by mediating decrotonylation ((2E)-butenoyl) of histones. This Xenopus laevis (African clawed frog) protein is Histone deacetylase 8 (hdac8).